The following is a 252-amino-acid chain: ATP synthase subunit a (252 aa).

The next 5 membrane-spanning stretches (helical) occupy residues 33–53 (GQVF…AFVA), 92–112 (VPFV…GALV), 130–150 (DINT…YAGL), 196–216 (LVVS…VMVL), and 217–237 (GLFT…TYIG).

This sequence belongs to the ATPase A chain family. As to quaternary structure, F-type ATPases have 2 components, CF(1) - the catalytic core - and CF(0) - the membrane proton channel. CF(1) has five subunits: alpha(3), beta(3), gamma(1), delta(1), epsilon(1). CF(0) has four main subunits: a, b, b' and c.

It is found in the cellular thylakoid membrane. Functionally, key component of the proton channel; it plays a direct role in the translocation of protons across the membrane. The protein is ATP synthase subunit a of Thermosynechococcus vestitus (strain NIES-2133 / IAM M-273 / BP-1).